The following is a 206-amino-acid chain: uncharacterized protein (206 aa).

The chain crosses the membrane as a helical span at residues 4–24; sequence LLVVIAVALFIAAIVVLVVAI.

The protein localises to the membrane. This is an uncharacterized protein from Mycobacterium tuberculosis (strain CDC 1551 / Oshkosh).